Here is a 190-residue protein sequence, read N- to C-terminus: RRP15-like protein (190 aa).

Basic and acidic residues predominate over residues 1–11; that stretch reads MSTKNRDRLVV. Disordered stretches follow at residues 1 to 69 and 119 to 190; these read MSTK…TRKE and QKTM…SDED. The segment covering 55–66 has biased composition (basic residues); sequence QRKKKKVIKKLT. Residues 59–84 are a coiled coil; that stretch reads KKVIKKLTRKEQSLKHSVKEYRIKLA. Residues 119-153 show a composition bias toward basic and acidic residues; that stretch reads QKTMSDAVKEKMTARDRKEARERFDGKNFDSDKFA. A compositionally biased stretch (acidic residues) spans 167 to 190; that stretch reads GEEEDEQMNIGDDEIDAGNYSDED.

It belongs to the RRP15 family.

This chain is RRP15-like protein, found in Caenorhabditis briggsae.